The chain runs to 446 residues: Chromosomal replication initiator protein DnaA (446 aa).

Residues 1–92 form a domain I, interacts with DnaA modulators region; that stretch reads MENISDLWNS…SQAEEEIDLP (92 aa). A disordered region spans residues 87–107; that stretch reads EEIDLPPSKPNSAQDDSNHLP. Positions 93–109 are domain II; it reads PSKPNSAQDDSNHLPQS. The span at 96 to 107 shows a compositional bias: polar residues; sequence PNSAQDDSNHLP. A domain III, AAA+ region region spans residues 110–326; that stretch reads MLNPKYTFDT…GALIRVVAYS (217 aa). 4 residues coordinate ATP: glycine 154, glycine 156, lysine 157, and threonine 158. The interval 327 to 446 is domain IV, binds dsDNA; sequence SLINKDINAD…QVEEINDILK (120 aa).

Belongs to the DnaA family. Oligomerizes as a right-handed, spiral filament on DNA at oriC.

Its subcellular location is the cytoplasm. Its function is as follows. Plays an essential role in the initiation and regulation of chromosomal replication. ATP-DnaA binds to the origin of replication (oriC) to initiate formation of the DNA replication initiation complex once per cell cycle. Binds the DnaA box (a 9 base pair repeat at the origin) and separates the double-stranded (ds)DNA. Forms a right-handed helical filament on oriC DNA; dsDNA binds to the exterior of the filament while single-stranded (ss)DNA is stabiized in the filament's interior. The ATP-DnaA-oriC complex binds and stabilizes one strand of the AT-rich DNA unwinding element (DUE), permitting loading of DNA polymerase. After initiation quickly degrades to an ADP-DnaA complex that is not apt for DNA replication. Binds acidic phospholipids. The protein is Chromosomal replication initiator protein DnaA of Bacillus cereus (strain ATCC 10987 / NRS 248).